Consider the following 398-residue polypeptide: T-box transcription factor TBX1 (398 aa).

The disordered stretch occupies residues 23–72 (AAGGFPGAASPGADPYGPREPPPPPPRYDPCAAAAPGAPGPPPPPHAYPF). The segment covering 29–38 (GAASPGADPY) has biased composition (low complexity). Composition is skewed to pro residues over residues 40 to 50 (PREPPPPPPRY) and 60 to 69 (APGPPPPPHA). The segment at residues 119–297 (LWDEFNQLGT…SNPFAKGFRD (179 aa)) is a DNA-binding region (T-box).

Binds DNA as a dimer. Interacts with DSCR6. Interacts with NKX2-5.

The protein resides in the nucleus. Its function is as follows. Transcription factor that plays a key role in cardiovascular development by promoting pharyngeal arch segmentation during embryonic development. Also involved in craniofacial muscle development. Together with NKX2-5, acts as a regulator of asymmetric cardiac morphogenesis by promoting expression of PITX2. Acts upstream of TBX1 for the formation of the thymus and parathyroid glands from the third pharyngeal pouch. Required for hair follicle stem cell self-renewal. Binds to the palindromic T site 5'-TTCACACCTAGGTGTGAA-3' DNA sequence. The polypeptide is T-box transcription factor TBX1 (Homo sapiens (Human)).